The sequence spans 475 residues: Trifunctional enzyme subunit beta, mitochondrial (475 aa).

Residues 1–34 (MTTILTCPFKKLPTTSKWALRFAIRPLSCSSQLR) constitute a mitochondrion transit peptide. An N6-acetyllysine; alternate modification is found at Lys73. At Lys73 the chain carries N6-succinyllysine; alternate. Cys139 acts as the Acyl-thioester intermediate in catalysis. Residues 174 to 221 (IRHSRKMRKLMLDLNKAKSMGQRLSLISKFRLNFLAPELPAVAEFSTS) lie within the membrane without spanning it. The residue at position 189 (Lys189) is an N6-acetyllysine; alternate. An N6-succinyllysine; alternate modification is found at Lys189. N6-succinyllysine is present on residues Lys191, Lys273, and Lys292. N6-acetyllysine; alternate is present on Lys294. Position 294 is an N6-succinyllysine; alternate (Lys294). At Lys299 the chain carries N6-acetyllysine. Position 333 is an N6-acetyllysine; alternate (Lys333). Lys333 is subject to N6-succinyllysine; alternate. N6-acetyllysine is present on residues Lys349 and Lys362. Residue Cys459 is the Proton donor/acceptor of the active site.

Belongs to the thiolase-like superfamily. Thiolase family. In terms of assembly, heterotetramer of 2 alpha/HADHA and 2 beta/HADHB subunits; forms the mitochondrial trifunctional enzyme. Also purified as higher order heterooligomers including a 4 alpha/HADHA and 4 beta/HADHB heterooligomer which physiological significance remains unclear. The mitochondrial trifunctional enzyme interacts with MTLN. Interacts with RSAD2/viperin.

Its subcellular location is the mitochondrion. It localises to the mitochondrion inner membrane. The protein resides in the mitochondrion outer membrane. The protein localises to the endoplasmic reticulum. It catalyses the reaction an acyl-CoA + acetyl-CoA = a 3-oxoacyl-CoA + CoA. The catalysed reaction is butanoyl-CoA + acetyl-CoA = 3-oxohexanoyl-CoA + CoA. The enzyme catalyses hexanoyl-CoA + acetyl-CoA = 3-oxooctanoyl-CoA + CoA. It carries out the reaction octanoyl-CoA + acetyl-CoA = 3-oxodecanoyl-CoA + CoA. It catalyses the reaction decanoyl-CoA + acetyl-CoA = 3-oxododecanoyl-CoA + CoA. The catalysed reaction is dodecanoyl-CoA + acetyl-CoA = 3-oxotetradecanoyl-CoA + CoA. The enzyme catalyses tetradecanoyl-CoA + acetyl-CoA = 3-oxohexadecanoyl-CoA + CoA. It functions in the pathway lipid metabolism; fatty acid beta-oxidation. Mitochondrial trifunctional enzyme catalyzes the last three of the four reactions of the mitochondrial beta-oxidation pathway. The mitochondrial beta-oxidation pathway is the major energy-producing process in tissues and is performed through four consecutive reactions breaking down fatty acids into acetyl-CoA. Among the enzymes involved in this pathway, the trifunctional enzyme exhibits specificity for long-chain fatty acids. Mitochondrial trifunctional enzyme is a heterotetrameric complex composed of two proteins, the trifunctional enzyme subunit alpha/HADHA carries the 2,3-enoyl-CoA hydratase and the 3-hydroxyacyl-CoA dehydrogenase activities, while the trifunctional enzyme subunit beta/HADHB described here bears the 3-ketoacyl-CoA thiolase activity. This chain is Trifunctional enzyme subunit beta, mitochondrial (HADHB), found in Macaca fascicularis (Crab-eating macaque).